The chain runs to 218 residues: MANKMVGKGKLPVESEDAQKLRFQAELEFVQCLANPNYLHFLAQRGFFKDSNFINYLKYLLHWKDPEMAKYLKYPMCLYFLDLLQYEHFRREIVNAQCCKFIDDQAILLWQHYTRRRTRLTSLGTTSLTGLAVGGQPVGGGVQGPLLSNEPLPMANNNNNTNSTNANNPQAPGQQQQQNGAPMIQQNGLSNNTGMSGGVMGSGARDGGGVNLSGQKVS.

Positions 142–218 (VQGPLLSNEP…GVNLSGQKVS (77 aa)) are disordered. Residues 155 to 187 (ANNNNNTNSTNANNPQAPGQQQQQNGAPMIQQN) show a composition bias toward low complexity. A compositionally biased stretch (gly residues) spans 195–211 (MSGGVMGSGARDGGGVN).

Belongs to the Mediator complex subunit 31 family. In terms of assembly, component of the Mediator complex.

The protein localises to the nucleus. Component of the Mediator complex, a coactivator involved in the regulated transcription of nearly all RNA polymerase II-dependent genes. Mediator functions as a bridge to convey information from gene-specific regulatory proteins to the basal RNA polymerase II transcription machinery. Mediator is recruited to promoters by direct interactions with regulatory proteins and serves as a scaffold for the assembly of a functional preinitiation complex with RNA polymerase II and the general transcription factors. In Aedes aegypti (Yellowfever mosquito), this protein is Mediator of RNA polymerase II transcription subunit 31 (MED31).